Consider the following 240-residue polypeptide: UDP-2,3-diacylglucosamine hydrolase (240 aa).

Aspartate 8, histidine 10, aspartate 41, asparagine 79, and histidine 114 together coordinate Mn(2+). 79–80 (NR) contributes to the substrate binding site. Residues aspartate 122, serine 160, asparagine 164, lysine 167, and histidine 195 each coordinate substrate. 2 residues coordinate Mn(2+): histidine 195 and histidine 197.

This sequence belongs to the LpxH family. The cofactor is Mn(2+).

The protein resides in the cell inner membrane. The enzyme catalyses UDP-2-N,3-O-bis[(3R)-3-hydroxytetradecanoyl]-alpha-D-glucosamine + H2O = 2-N,3-O-bis[(3R)-3-hydroxytetradecanoyl]-alpha-D-glucosaminyl 1-phosphate + UMP + 2 H(+). It participates in glycolipid biosynthesis; lipid IV(A) biosynthesis; lipid IV(A) from (3R)-3-hydroxytetradecanoyl-[acyl-carrier-protein] and UDP-N-acetyl-alpha-D-glucosamine: step 4/6. In terms of biological role, hydrolyzes the pyrophosphate bond of UDP-2,3-diacylglucosamine to yield 2,3-diacylglucosamine 1-phosphate (lipid X) and UMP by catalyzing the attack of water at the alpha-P atom. Involved in the biosynthesis of lipid A, a phosphorylated glycolipid that anchors the lipopolysaccharide to the outer membrane of the cell. The sequence is that of UDP-2,3-diacylglucosamine hydrolase from Yersinia pestis bv. Antiqua (strain Angola).